The primary structure comprises 126 residues: S-adenosylmethionine decarboxylase proenzyme (126 aa).

Serine 63 functions as the Schiff-base intermediate with substrate; via pyruvic acid in the catalytic mechanism. Pyruvic acid (Ser); by autocatalysis is present on serine 63. Histidine 68 (proton acceptor; for processing activity) is an active-site residue. Residue cysteine 83 is the Proton donor; for catalytic activity of the active site.

It belongs to the prokaryotic AdoMetDC family. Type 1 subfamily. In terms of assembly, heterotetramer of two alpha and two beta chains arranged as a dimer of alpha/beta heterodimers. Requires pyruvate as cofactor. Post-translationally, is synthesized initially as an inactive proenzyme. Formation of the active enzyme involves a self-maturation process in which the active site pyruvoyl group is generated from an internal serine residue via an autocatalytic post-translational modification. Two non-identical subunits are generated from the proenzyme in this reaction, and the pyruvate is formed at the N-terminus of the alpha chain, which is derived from the carboxyl end of the proenzyme. The post-translation cleavage follows an unusual pathway, termed non-hydrolytic serinolysis, in which the side chain hydroxyl group of the serine supplies its oxygen atom to form the C-terminus of the beta chain, while the remainder of the serine residue undergoes an oxidative deamination to produce ammonia and the pyruvoyl group blocking the N-terminus of the alpha chain.

It carries out the reaction S-adenosyl-L-methionine + H(+) = S-adenosyl 3-(methylsulfanyl)propylamine + CO2. It functions in the pathway amine and polyamine biosynthesis; S-adenosylmethioninamine biosynthesis; S-adenosylmethioninamine from S-adenosyl-L-methionine: step 1/1. Its function is as follows. Catalyzes the decarboxylation of S-adenosylmethionine to S-adenosylmethioninamine (dcAdoMet), the propylamine donor required for the synthesis of the polyamines spermine and spermidine from the diamine putrescine. The polypeptide is S-adenosylmethionine decarboxylase proenzyme (Oceanobacillus iheyensis (strain DSM 14371 / CIP 107618 / JCM 11309 / KCTC 3954 / HTE831)).